The chain runs to 308 residues: Olfactory receptor 6F1 (308 aa).

Topologically, residues 1–25 are extracellular; it reads MDTGNKTLPQDFLLLGFPGSQTLQL. Asn-5 is a glycosylation site (N-linked (GlcNAc...) asparagine). A helical transmembrane segment spans residues 26-46; it reads SLFMLFLVMYILTVSGNVAIL. Residues 47 to 54 are Cytoplasmic-facing; it reads MLVSTSHQ. A helical membrane pass occupies residues 55-75; sequence LHTPMYFFLSNLSFLEIWYTT. Residues 76-99 are Extracellular-facing; that stretch reads AAVPKALAILLGRSQTISFTSCLL. Cys-97 and Cys-189 form a disulfide bridge. A helical membrane pass occupies residues 100–120; the sequence is QMYFVFSLGCTEYFLLAAMAY. The Cytoplasmic portion of the chain corresponds to 121–139; the sequence is DRCLAICYPLHYGAIMSSL. A helical membrane pass occupies residues 140-160; it reads LSAQLALGSWVCGFVAIAVPT. Topologically, residues 161-197 are extracellular; sequence ALISGLSFCGPRAINHFFCDIAPWIALACTNTQAVEL. A helical membrane pass occupies residues 198–217; it reads VAFVIAVVVILSSCLITFVS. At 218 to 237 the chain is on the cytoplasmic side; the sequence is YVYIISTILRIPSASGRSKA. A helical transmembrane segment spans residues 238 to 258; it reads FSTCSSHLTVVLIWYGSTVFL. Residues 259–271 lie on the Extracellular side of the membrane; it reads HVRTSIKDALDLI. A helical transmembrane segment spans residues 272 to 292; the sequence is KAVHVLNTVVTPVLNPFIYTL. Residues 293 to 308 are Cytoplasmic-facing; sequence RNKEVRETLLKKWKGK.

Belongs to the G-protein coupled receptor 1 family.

The protein localises to the cell membrane. Functionally, odorant receptor. The chain is Olfactory receptor 6F1 (OR6F1) from Homo sapiens (Human).